Reading from the N-terminus, the 139-residue chain is MKLLIALLALVTAAIAQNGFGQGGYGGQGGFGGFGGLGGQAGFGGQIGFNGQGGVGGQVGIGQGGVHPGQGGFAGQGSPNQYQPGYGNPVGSGHFHGGNPVESGHFHGNPHEYPEHHGEHHREHHEHHGHHEHHGHHRH.

The first 16 residues, 1–16, serve as a signal peptide directing secretion; the sequence is MKLLIALLALVTAAIA. Over residues 60-75 the composition is skewed to gly residues; that stretch reads GIGQGGVHPGQGGFAG. Positions 60-139 are disordered; it reads GIGQGGVHPG…HHEHHGHHRH (80 aa). Residues 109-121 show a composition bias toward basic and acidic residues; sequence NPHEYPEHHGEHH. Residues 122 to 139 are compositionally biased toward basic residues; it reads REHHEHHGHHEHHGHHRH.

It localises to the secreted. In terms of biological role, likely to be involved in the establishment of the head. The protein is Protein spalt-accessory (sala) of Drosophila simulans (Fruit fly).